The primary structure comprises 436 residues: Glutamate-1-semialdehyde 2,1-aminomutase (436 aa).

Residue lysine 269 is modified to N6-(pyridoxal phosphate)lysine.

It belongs to the class-III pyridoxal-phosphate-dependent aminotransferase family. HemL subfamily. In terms of assembly, homodimer. The cofactor is pyridoxal 5'-phosphate.

The protein localises to the cytoplasm. It carries out the reaction (S)-4-amino-5-oxopentanoate = 5-aminolevulinate. It functions in the pathway porphyrin-containing compound metabolism; protoporphyrin-IX biosynthesis; 5-aminolevulinate from L-glutamyl-tRNA(Glu): step 2/2. Its pathway is porphyrin-containing compound metabolism; chlorophyll biosynthesis. This Heliobacterium modesticaldum (strain ATCC 51547 / Ice1) protein is Glutamate-1-semialdehyde 2,1-aminomutase.